A 497-amino-acid polypeptide reads, in one-letter code: tRNA-2-methylthio-N(6)-dimethylallyladenosine synthase (497 aa).

The tract at residues 1–50 is disordered; the sequence is MTGTSNIPTHGKEHKDAPALLPLPAPNPHHTHAAHPGDPSHDRPPSRGKL. The region spanning 48–165 is the MTTase N-terminal domain; sequence GKLFIKTHGC…LPDMIRARRE (118 aa). [4Fe-4S] cluster contacts are provided by C57, C94, C128, C202, C206, and C209. Residues 188–430 form the Radical SAM core domain; sequence RAEGPSAFVS…QKHINAYAAD (243 aa). Positions 433–496 constitute a TRAM domain; sequence KRMIGTVQTV…TNSLRGRVHT (64 aa).

This sequence belongs to the methylthiotransferase family. MiaB subfamily. In terms of assembly, monomer. Requires [4Fe-4S] cluster as cofactor.

It localises to the cytoplasm. The catalysed reaction is N(6)-dimethylallyladenosine(37) in tRNA + (sulfur carrier)-SH + AH2 + 2 S-adenosyl-L-methionine = 2-methylsulfanyl-N(6)-dimethylallyladenosine(37) in tRNA + (sulfur carrier)-H + 5'-deoxyadenosine + L-methionine + A + S-adenosyl-L-homocysteine + 2 H(+). Its function is as follows. Catalyzes the methylthiolation of N6-(dimethylallyl)adenosine (i(6)A), leading to the formation of 2-methylthio-N6-(dimethylallyl)adenosine (ms(2)i(6)A) at position 37 in tRNAs that read codons beginning with uridine. The polypeptide is tRNA-2-methylthio-N(6)-dimethylallyladenosine synthase (Xylella fastidiosa (strain M12)).